Here is a 1509-residue protein sequence, read N- to C-terminus: ABC transporter G family member 38 (1509 aa).

The ABC transporter 1 domain occupies 196–467 (LGLVGLNFAK…FERCGFRCPE (272 aa)). Residue 229–236 (GPPSSGKT) participates in ATP binding. Residues 545-758 (ELLKTSCSKE…AYIAFSSNEM (214 aa)) form the ABC transmembrane type-2 1 domain. Helical transmembrane passes span 563-583 (FVYI…STVF), 598-618 (IYIG…FADL), 651-671 (IPSS…TMGF), 682-702 (LLVV…TAGL), 707-727 (VVTN…GGFI), 733-753 (IPKW…YIAF), and 791-811 (YWIA…LFSL). Positions 908 to 1160 (MSFNEINYYV…KVVEYFEAIP (253 aa)) constitute an ABC transporter 2 domain. 953 to 960 (GVSGAGKT) is an ATP binding site. An ABC transmembrane type-2 2 domain is found at 1233 to 1447 (NQFKLCLWKQ…TVYGLIVSQY (215 aa)). The next 7 membrane-spanning stretches (helical) occupy residues 1252 to 1272 (YNLV…TIFW), 1284 to 1304 (LLVI…ENSV), 1336 to 1356 (VVVE…IVYP), 1367 to 1387 (FFWF…YGMM), 1397 to 1417 (VASI…GFFI), 1425 to 1445 (WWVW…LIVS), and 1478 to 1498 (FMGV…FTYA).

It belongs to the ABC transporter superfamily. ABCG family. PDR (TC 3.A.1.205) subfamily.

The protein localises to the membrane. May be a general defense protein. The protein is ABC transporter G family member 38 of Oryza sativa subsp. japonica (Rice).